A 262-amino-acid chain; its full sequence is Small ribosomal subunit protein eS4 (262 aa).

Residues 42–104 enclose the S4 RNA-binding domain; that stretch reads LPLILILRNR…TNEDFRLLYD (63 aa).

Belongs to the eukaryotic ribosomal protein eS4 family.

Its subcellular location is the cytoplasm. This Gossypium hirsutum (Upland cotton) protein is Small ribosomal subunit protein eS4 (RPS4).